The sequence spans 68 residues: Large ribosomal subunit protein bL32 (68 aa).

The segment at 1 to 24 (MAVPQNRVTRSRRNMRRSHDALVA) is disordered.

Belongs to the bacterial ribosomal protein bL32 family.

In Paracoccus denitrificans (strain Pd 1222), this protein is Large ribosomal subunit protein bL32.